Reading from the N-terminus, the 302-residue chain is Nucleotide-binding protein STH186 (302 aa).

15–22 (GMSGAGKT) provides a ligand contact to ATP. Position 66-69 (66-69 (DIRG)) interacts with GTP.

It belongs to the RapZ-like family.

In terms of biological role, displays ATPase and GTPase activities. The polypeptide is Nucleotide-binding protein STH186 (Symbiobacterium thermophilum (strain DSM 24528 / JCM 14929 / IAM 14863 / T)).